The sequence spans 820 residues: MAITRRSFLKGVATTSAASVIGPSLLASASANAVETTGTWKVSGSHWGAFRAHIYAGKVQEIKPIELDQNPTEMLNGIKGIIYSPSRVRYPMVRLDWLKKHKYSADTRGNNRFVRVTWDEALDLFYRELERVQKEYGPWALHAGQTGWNQTGSFNNCTAHMQRAVGMHGNYITKVGDYSTGAGQTILPYVLGSTEVYAQGTSWSEILENADNIILWANDPVKNLQVGWNCETHESYAYLAQLKEKVAKGEINVISVDPVKNKTQRYLENDHLYVNPMTDVPFMLAIAHVLYTENLYDKKFIETYCLGFEEFINYVQGKTKDKVEKTPEWAAPICGVKADKIREFARMLVKGRTQILMGWCIQRQEHGEQPYWAAAVVAAMIGQIGLPGGGISYGHHYSSIGVPSTGFAGPGGFPRNLDAGMKPKWDNNDFNGYSRTIPVARWIDCLLEPGKEINYNGGKVKLPDFKMMVISGCNPWHHHQDRNRMKQAFQKLQTVVTIDFAWTATCRFSDIVLPACTQWERNDIDVYGSYSSRGLIAMHRLVDPLFQSKPDFQIMKELTERFGRSEEYSRGMSEMDWIRSLYNDCKKSNEGKFEMPEFDEFWEKSVLDFGQGQPWVRHADFRQDPEINPLGTPSGFIEITSRKIGRYGYEHCQEHPMWFEKSERSHGGPGSDKHPFWLQSCHPDKRLHSQMCESEEFRATYAVKGREPVYINPLDAKAKGIKEGDLVRVFNDRGQLLAGAVLTDSYPRGVIRIEEGAWYGPLNEKVGAIDTYGDPNTLTQDIGSSELAQATSANTCIVDFEKFTGKVPPVTSFGGPIEVA.

The tat-type signal signal peptide spans 1-33 (MAITRRSFLKGVATTSAASVIGPSLLASASANA). Residue Ser-179 participates in Mo-bis(molybdopterin guanine dinucleotide) binding.

The protein belongs to the prokaryotic molybdopterin-containing oxidoreductase family. Mo-bis(molybdopterin guanine dinucleotide) is required as a cofactor. Post-translationally, predicted to be exported by the Tat system. The position of the signal peptide cleavage has not been experimentally proven.

Its subcellular location is the periplasm. The enzyme catalyses trimethylamine + 2 Fe(III)-[cytochrome c] + H2O = trimethylamine N-oxide + 2 Fe(II)-[cytochrome c] + 3 H(+). Functionally, reduces trimethylamine-N-oxide (TMAO) into trimethylamine; an anaerobic reaction coupled to energy-yielding reactions. The polypeptide is Trimethylamine-N-oxide reductase (torA) (Vibrio vulnificus (strain CMCP6)).